The sequence spans 100 residues: MSLALSDVKRLSMLAQIDLTDAQSAQTLDKLNGIFALVEQLSAVDTTGVEPLNHPIAALLPDLSLRLRDDVVSEPNRRDDYQQVAPATQDGLYLVPKVIE.

It belongs to the GatC family. As to quaternary structure, heterotrimer of A, B and C subunits.

The catalysed reaction is L-glutamyl-tRNA(Gln) + L-glutamine + ATP + H2O = L-glutaminyl-tRNA(Gln) + L-glutamate + ADP + phosphate + H(+). It catalyses the reaction L-aspartyl-tRNA(Asn) + L-glutamine + ATP + H2O = L-asparaginyl-tRNA(Asn) + L-glutamate + ADP + phosphate + 2 H(+). Its function is as follows. Allows the formation of correctly charged Asn-tRNA(Asn) or Gln-tRNA(Gln) through the transamidation of misacylated Asp-tRNA(Asn) or Glu-tRNA(Gln) in organisms which lack either or both of asparaginyl-tRNA or glutaminyl-tRNA synthetases. The reaction takes place in the presence of glutamine and ATP through an activated phospho-Asp-tRNA(Asn) or phospho-Glu-tRNA(Gln). This is Aspartyl/glutamyl-tRNA(Asn/Gln) amidotransferase subunit C from Herminiimonas arsenicoxydans.